A 186-amino-acid chain; its full sequence is Large ribosomal subunit protein uL6 (186 aa).

It belongs to the universal ribosomal protein uL6 family. As to quaternary structure, part of the 50S ribosomal subunit.

Its function is as follows. This protein binds to the 23S rRNA, and is important in its secondary structure. It is located near the subunit interface in the base of the L7/L12 stalk, and near the tRNA binding site of the peptidyltransferase center. The chain is Large ribosomal subunit protein uL6 from Sulfurisphaera tokodaii (strain DSM 16993 / JCM 10545 / NBRC 100140 / 7) (Sulfolobus tokodaii).